Reading from the N-terminus, the 1139-residue chain is Retinoblastoma-like protein 2 (1139 aa).

A disordered region spans residues 1–45 (MPSGGDQSPPPPPPPPAAAASDEEEEDDGEAEDAAPPAESPTPQI). Pro residues predominate over residues 8–17 (SPPPPPPPPA). Residues 21 to 33 (SDEEEEDDGEAED) are compositionally biased toward acidic residues. Ser-413 carries the phosphoserine modification. Thr-417 carries the phosphothreonine modification. Positions 417 to 616 (TPVSTATHSL…EKIRDNENRV (200 aa)) are domain A. The tract at residues 417–1024 (TPVSTATHSL…KQIKTFAMKY (608 aa)) is pocket; binds E1A. O-linked (GlcNAc) serine glycosylation occurs at Ser-420. Residues 617 to 827 (PTCEEVMPPQ…KQGQSVTSSS (211 aa)) form a spacer region. Residue Ser-639 is modified to Phosphoserine. Thr-642 bears the Phosphothreonine mark. Residues 654-678 (GGLGRSITSPTTLYDRYSSPPASTT) form a disordered region. 3 positions are modified to phosphoserine: Ser-662, Ser-672, and Ser-688. Residues 810–827 (ISPGGQQQKQGQSVTSSS) are compositionally biased toward low complexity. Disordered stretches follow at residues 810-831 (ISPG…NRPR) and 933-999 (KGKR…DMEE). A domain B region spans residues 828–1024 (NRPRKTSSLS…KQIKTFAMKY (197 aa)). A compositionally biased stretch (polar residues) spans 941-955 (SGSSDSRSHQNSPTE). Phosphoserine is present on residues Ser-948, Ser-952, Ser-966, Ser-971, Ser-972, and Ser-973. The segment covering 964–973 (DSSPVMRSSS) has biased composition (low complexity). At Thr-974 the chain carries Phosphothreonine. The span at 977–987 (VPQPSSAPPTP) shows a compositional bias: pro residues. Phosphoserine occurs at positions 981 and 982. Thr-986 is subject to Phosphothreonine. Ser-1035, Ser-1068, Ser-1080, and Ser-1112 each carry phosphoserine.

This sequence belongs to the retinoblastoma protein (RB) family. In terms of assembly, interacts with AATF. Interacts with KMT5B, KMT5C and USP4. Component of the DREAM complex (also named LINC complex) at least composed of E2F4, E2F5, LIN9, LIN37, LIN52, LIN54, MYBL1, MYBL2, RBL1, RBL2, RBBP4, TFDP1 and TFDP2. The complex exists in quiescent cells where it represses cell cycle-dependent genes. It dissociates in S phase when LIN9, LIN37, LIN52 and LIN54 form a subcomplex that binds to MYBL2. Interacts with RINT1. Interacts with PML (isoform PML-1, isoform PML-2, isoform PML-3, isoform PML-4 and isoform PML-5). Interacts with RBBP9. Interacts with CD53. (Microbial infection) Interacts with JC virus small t antigen. In terms of processing, during G0 and early G1 phase of the cell cycle, phosphorylated on Ser-639 and on 5 sites within the domain B. Phosphorylation on Ser-672 in G1 leads to its ubiquitin-dependent proteolysis.

It localises to the nucleus. In terms of biological role, key regulator of entry into cell division. Directly involved in heterochromatin formation by maintaining overall chromatin structure and, in particular, that of constitutive heterochromatin by stabilizing histone methylation. Recruits and targets histone methyltransferases KMT5B and KMT5C, leading to epigenetic transcriptional repression. Controls histone H4 'Lys-20' trimethylation. Probably acts as a transcription repressor by recruiting chromatin-modifying enzymes to promoters. Potent inhibitor of E2F-mediated trans-activation, associates preferentially with E2F5. Binds to cyclins A and E. Binds to and may be involved in the transforming capacity of the adenovirus E1A protein. May act as a tumor suppressor. The polypeptide is Retinoblastoma-like protein 2 (RBL2) (Homo sapiens (Human)).